Consider the following 393-residue polypeptide: Formate-dependent phosphoribosylglycinamide formyltransferase (393 aa).

Residues 22–23 (EL) and Glu82 each bind N(1)-(5-phospho-beta-D-ribosyl)glycinamide. ATP contacts are provided by residues Arg114, Lys155, 160–165 (SSGKGQ), 195–198 (EGFI), and Glu203. The ATP-grasp domain maps to 119–308 (RLAAEELDLP…QFALHARAIL (190 aa)). Mg(2+) is bound by residues Glu267 and Glu279. N(1)-(5-phospho-beta-D-ribosyl)glycinamide is bound by residues Asp286, Lys356, and 363 to 364 (RR).

Belongs to the PurK/PurT family. Homodimer.

It carries out the reaction N(1)-(5-phospho-beta-D-ribosyl)glycinamide + formate + ATP = N(2)-formyl-N(1)-(5-phospho-beta-D-ribosyl)glycinamide + ADP + phosphate + H(+). It participates in purine metabolism; IMP biosynthesis via de novo pathway; N(2)-formyl-N(1)-(5-phospho-D-ribosyl)glycinamide from N(1)-(5-phospho-D-ribosyl)glycinamide (formate route): step 1/1. In terms of biological role, involved in the de novo purine biosynthesis. Catalyzes the transfer of formate to 5-phospho-ribosyl-glycinamide (GAR), producing 5-phospho-ribosyl-N-formylglycinamide (FGAR). Formate is provided by PurU via hydrolysis of 10-formyl-tetrahydrofolate. The sequence is that of Formate-dependent phosphoribosylglycinamide formyltransferase from Pseudomonas fluorescens (strain Pf0-1).